The chain runs to 256 residues: Adenylate kinase (256 aa).

Gly-49–Thr-54 contributes to the ATP binding site. The segment at Ala-69 to Val-98 is NMP. AMP contacts are provided by residues Thr-70, Arg-75, Gly-96–Val-98, Gly-125–Arg-128, and Gln-132. An LID region spans residues Gly-166–Asp-203. Residues Arg-167 and Ser-176–Tyr-177 contribute to the ATP site. 2 residues coordinate AMP: Arg-200 and Arg-211. Gln-239 provides a ligand contact to ATP.

Belongs to the adenylate kinase family. AK2 subfamily. In terms of assembly, monomer.

The protein resides in the cytoplasm. The protein localises to the cytosol. It localises to the mitochondrion intermembrane space. The enzyme catalyses AMP + ATP = 2 ADP. Its function is as follows. Catalyzes the reversible transfer of the terminal phosphate group between ATP and AMP. Plays an important role in cellular energy homeostasis and in adenine nucleotide metabolism. Adenylate kinase activity is critical for regulation of the phosphate utilization and the AMP de novo biosynthesis pathways. In Laccaria bicolor (strain S238N-H82 / ATCC MYA-4686) (Bicoloured deceiver), this protein is Adenylate kinase.